Reading from the N-terminus, the 638-residue chain is uncharacterized protein (638 aa).

The signal sequence occupies residues 1–31; it reads MKFIKFNDSTIDSFLFMMLTDLAKTLTKSEA. Composition is skewed to basic and acidic residues over residues 247-256, 273-284, 301-310, and 329-342; these read EEKKAPKLSD, EEMPTWHRETEA, DLGKDASREG, and RKDYSKLEALESQK. 2 disordered regions span residues 247-285 and 301-354; these read EEKKAPKLSDDITLPKQSDGDEDIHEEEMPTWHRETEAP and DLGK…ADGK. One can recognise a VWFA domain in the interval 445 to 632; that stretch reads FTLLVDCSAS…DVLYPLLKKL (188 aa).

This is an uncharacterized protein from Bacillus subtilis (strain 168).